The primary structure comprises 65 residues: Large ribosomal subunit protein bL35 (65 aa).

Residues 1–28 form a disordered region; it reads MPKMKTHRGAAKRFKKTGTGKIKRGQSK.

The protein belongs to the bacterial ribosomal protein bL35 family.

This Acidobacterium capsulatum (strain ATCC 51196 / DSM 11244 / BCRC 80197 / JCM 7670 / NBRC 15755 / NCIMB 13165 / 161) protein is Large ribosomal subunit protein bL35.